A 380-amino-acid polypeptide reads, in one-letter code: Crotonobetainyl-CoA reductase (380 aa).

The protein belongs to the acyl-CoA dehydrogenase family. In terms of assembly, homotetramer. FAD serves as cofactor.

The protein localises to the cytoplasm. The catalysed reaction is 4-(trimethylamino)butanoyl-CoA + oxidized [electron-transfer flavoprotein] + H(+) = crotonobetainyl-CoA + reduced [electron-transfer flavoprotein]. The protein operates within amine and polyamine metabolism; carnitine metabolism. Functionally, catalyzes the reduction of crotonobetainyl-CoA to gamma-butyrobetainyl-CoA. This is Crotonobetainyl-CoA reductase from Salmonella agona (strain SL483).